The following is a 272-amino-acid chain: Protein UL11 (272 aa).

The first 31 residues, 1–31 (MLFRYITFHREKVLYLTAACIFGVYISLHDA), serve as a signal peptide directing secretion. Over 32 to 224 (CIPVVGKIGT…PLQPSPQHQH (193 aa)) the chain is Extracellular. Residues Asn-42, Asn-93, Asn-100, and Asn-142 are each glycosylated (N-linked (GlcNAc...) asparagine; by host). The tract at residues 142 to 200 (NGTFPTTTTKKPTTTTRTTTTTTQRTTTTRTTTTAKKTTISTTHHKHPSPKKSTTPNSH) is disordered. Positions 147–183 (TTTTKKPTTTTRTTTTTTQRTTTTRTTTTAKKTTIST) are enriched in low complexity. Residues 225–245 (LATHALWVLAVVIVIIIIIIF) traverse the membrane as a helical segment. At 246–272 (YFRIPQKLWLLWQHDKHGIVLIPQTDL) the chain is on the cytoplasmic side.

Belongs to the RL11 family. In terms of assembly, interacts with host PTPRC; this interaction affects T-cell signaling. Post-translationally, glycosylated.

It localises to the host cell membrane. It is found in the host endoplasmic reticulum. Functionally, plays a role in the modulation of host immune response by modulating T-cell function. Interacts with host PTPRC/CD45 and thereby reduces host TCR signaling and T-cell proliferation. In Human cytomegalovirus (strain Merlin) (HHV-5), this protein is Protein UL11 (UL11).